We begin with the raw amino-acid sequence, 116 residues long: Iron-sulfur cluster insertion protein ErpA (116 aa).

Positions 44, 108, and 110 each coordinate iron-sulfur cluster.

This sequence belongs to the HesB/IscA family. Homodimer. Iron-sulfur cluster serves as cofactor.

Functionally, required for insertion of 4Fe-4S clusters for at least IspG. The chain is Iron-sulfur cluster insertion protein ErpA from Shewanella denitrificans (strain OS217 / ATCC BAA-1090 / DSM 15013).